A 438-amino-acid chain; its full sequence is 5-methylthioadenosine/S-adenosylhomocysteine deaminase (438 aa).

Positions 66 and 68 each coordinate Zn(2+). Glu95, Arg148, and His188 together coordinate substrate. His215 provides a ligand contact to Zn(2+). 2 residues coordinate substrate: Glu218 and Asp305. Zn(2+) is bound at residue Asp305.

This sequence belongs to the metallo-dependent hydrolases superfamily. MTA/SAH deaminase family. Zn(2+) is required as a cofactor.

The enzyme catalyses S-adenosyl-L-homocysteine + H2O + H(+) = S-inosyl-L-homocysteine + NH4(+). It carries out the reaction S-methyl-5'-thioadenosine + H2O + H(+) = S-methyl-5'-thioinosine + NH4(+). Functionally, catalyzes the deamination of 5-methylthioadenosine and S-adenosyl-L-homocysteine into 5-methylthioinosine and S-inosyl-L-homocysteine, respectively. Is also able to deaminate adenosine. This Halalkalibacterium halodurans (strain ATCC BAA-125 / DSM 18197 / FERM 7344 / JCM 9153 / C-125) (Bacillus halodurans) protein is 5-methylthioadenosine/S-adenosylhomocysteine deaminase.